The following is a 153-amino-acid chain: Ribosome maturation factor RimP (153 aa).

The protein belongs to the RimP family.

It is found in the cytoplasm. Functionally, required for maturation of 30S ribosomal subunits. This chain is Ribosome maturation factor RimP, found in Desulforamulus reducens (strain ATCC BAA-1160 / DSM 100696 / MI-1) (Desulfotomaculum reducens).